Consider the following 88-residue polypeptide: Large ribosomal subunit protein bL31B (88 aa).

The protein belongs to the bacterial ribosomal protein bL31 family. Type B subfamily. In terms of assembly, part of the 50S ribosomal subunit.

The sequence is that of Large ribosomal subunit protein bL31B from Paraburkholderia xenovorans (strain LB400).